We begin with the raw amino-acid sequence, 292 residues long: Protease HtpX homolog (292 aa).

A run of 2 helical transmembrane segments spans residues threonine 7–glycine 27 and glycine 29–serine 49. Zn(2+) is bound at residue histidine 131. Residue glutamate 132 is part of the active site. Residue histidine 135 coordinates Zn(2+). 2 helical membrane-spanning segments follow: residues alanine 148–glycine 168 and leucine 178–isoleucine 198. Glutamate 203 provides a ligand contact to Zn(2+).

The protein belongs to the peptidase M48B family. Zn(2+) serves as cofactor.

The protein resides in the cell inner membrane. This Paracoccus denitrificans (strain Pd 1222) protein is Protease HtpX homolog.